We begin with the raw amino-acid sequence, 91 residues long: UPF0250 protein NGO_0791 (91 aa).

It belongs to the UPF0250 family.

This Neisseria gonorrhoeae (strain ATCC 700825 / FA 1090) protein is UPF0250 protein NGO_0791.